Here is a 203-residue protein sequence, read N- to C-terminus: CASP-like protein 2U5 (203 aa).

Residues 1–31 (MSEHRIPVAADKQISPPISAGEQKGCKGLKR) are Cytoplasmic-facing. A helical transmembrane segment spans residues 32 to 52 (TDLMLRFAAFVCCAVTMVVLI). The Extracellular segment spans residues 53–84 (TDKQTSAIQVPGFNNLTITKTVSFDLAKAFVY). Residue Asn67 is glycosylated (N-linked (GlcNAc...) asparagine). The helical transmembrane segment at 85-105 (LVSAAGIGAGYTLLVLVLSII) threads the bilayer. The Cytoplasmic segment spans residues 106 to 111 (SAERSK). A helical membrane pass occupies residues 112 to 132 (AIAWFIFVFDQLITYVLLAAA). Residues 133–164 (AASTEVAYMGAHAPPEASWLKVCSLFGRFCHQ) are Extracellular-facing. Residues 165–185 (LGASLVTSFISTVLFAFSAAI) traverse the membrane as a helical segment. The Cytoplasmic portion of the chain corresponds to 186-203 (SAYYLFSNTNVRPAYSKG).

It belongs to the Casparian strip membrane proteins (CASP) family. As to quaternary structure, homodimer and heterodimers.

It localises to the cell membrane. The chain is CASP-like protein 2U5 from Selaginella moellendorffii (Spikemoss).